The sequence spans 865 residues: Xylosyltransferase 2 (865 aa).

The Cytoplasmic portion of the chain corresponds to 1–15 (MVASARVQKLVRRYK). A helical; Signal-anchor for type II membrane protein transmembrane segment spans residues 16–36 (LAIATALAILLLQGLVVWSFS). At 37–865 (GLEEDEPGEK…GPVKADGRLR (829 aa)) the chain is on the lumenal side. Positions 39 to 157 (EEDEPGEKGR…EGAPQPTDNG (119 aa)) are disordered. Residues 53-65 (RPLDPGEGSKDTD) show a composition bias toward basic and acidic residues. Basic residues predominate over residues 73–82 (SAGRRHGRWR). An N-linked (GlcNAc...) asparagine glycan is attached at N122. Over residues 125 to 137 (GAAAGEALVGAAG) the composition is skewed to low complexity. 4 disulfide bridges follow: C162-C190, C206-C448, C467-C480, and C469-C478. Residues V239, D267, and 296–298 (TIW) contribute to the UDP-alpha-D-xylose site. N327 carries N-linked (GlcNAc...) asparagine glycosylation. 400–401 (DW) lines the UDP-alpha-D-xylose pocket. Residues S481 and 504–505 (RK) contribute to the UDP-alpha-D-xylose site. Disulfide bonds link C581–C833 and C826–C839. N683 carries an N-linked (GlcNAc...) asparagine glycan.

Belongs to the glycosyltransferase 14 family. XylT subfamily. As to quaternary structure, monomer. Requires Mg(2+) as cofactor. It depends on Mn(2+) as a cofactor. In terms of processing, contains disulfide bonds.

It localises to the golgi apparatus membrane. The protein resides in the secreted. The catalysed reaction is UDP-alpha-D-xylose + L-seryl-[protein] = 3-O-(beta-D-xylosyl)-L-seryl-[protein] + UDP + H(+). It participates in glycan metabolism; chondroitin sulfate biosynthesis. The protein operates within glycan metabolism; heparan sulfate biosynthesis. Its function is as follows. Catalyzes the first step in the biosynthesis of chondroitin sulfate, heparan sulfate and dermatan sulfate proteoglycans, such as DCN. Transfers D-xylose from UDP-D-xylose to specific serine residues of the core protein. This Canis lupus familiaris (Dog) protein is Xylosyltransferase 2 (XYLT2).